Reading from the N-terminus, the 232-residue chain is uncharacterized protein (232 aa).

Residues 89 to 140 adopt a coiled-coil conformation; it reads EFGTWQRRKNSLEDSLREVMKRRGELQDQLTAELGAIERMQTDLVGARQTLD.

This is an uncharacterized protein from Mycobacterium leprae (strain TN).